Here is a 507-residue protein sequence, read N- to C-terminus: ATP synthase subunit alpha, chloroplastic (507 aa).

An ATP-binding site is contributed by 170–177 (GDRQTGKA).

The protein belongs to the ATPase alpha/beta chains family. F-type ATPases have 2 components, CF(1) - the catalytic core - and CF(0) - the membrane proton channel. CF(1) has five subunits: alpha(3), beta(3), gamma(1), delta(1), epsilon(1). CF(0) has four main subunits: a, b, b' and c.

The protein resides in the plastid. It is found in the chloroplast thylakoid membrane. The catalysed reaction is ATP + H2O + 4 H(+)(in) = ADP + phosphate + 5 H(+)(out). Functionally, produces ATP from ADP in the presence of a proton gradient across the membrane. The alpha chain is a regulatory subunit. This is ATP synthase subunit alpha, chloroplastic from Calycanthus floridus var. glaucus (Eastern sweetshrub).